The primary structure comprises 121 residues: Small ribosomal subunit protein uS13 (121 aa).

The tract at residues 99-121 (GQRTRTNARTRRGARKTVAGKKK) is disordered. Basic residues predominate over residues 100 to 121 (QRTRTNARTRRGARKTVAGKKK).

It belongs to the universal ribosomal protein uS13 family. Part of the 30S ribosomal subunit. Forms a loose heterodimer with protein S19. Forms two bridges to the 50S subunit in the 70S ribosome.

Functionally, located at the top of the head of the 30S subunit, it contacts several helices of the 16S rRNA. In the 70S ribosome it contacts the 23S rRNA (bridge B1a) and protein L5 of the 50S subunit (bridge B1b), connecting the 2 subunits; these bridges are implicated in subunit movement. Contacts the tRNAs in the A and P-sites. The protein is Small ribosomal subunit protein uS13 of Synechococcus sp. (strain RCC307).